The chain runs to 334 residues: Baseplate wedge protein gp8 (334 aa).

The cysteines at positions 142 and 153 are disulfide-linked.

It belongs to the tevenvirinae baseplate structural protein gp8 family. As to quaternary structure, homodimer. Interacts with gp7. Part of the baseplate macromolecular complex which consists of gp5, gp5.4, gp27 (central spike complex); gp6, gp25, gp53 (inner baseplate); gp7, gp8 (intermediate baseplate); gp9, gp10, gp11, gp12 (peripheral); gp48 and gp54 (proximal region of the tail tube).

The protein resides in the virion. Functionally, intermediate baseplate protein. Involved in the tail assembly. This Enterobacteria phage T4 (Bacteriophage T4) protein is Baseplate wedge protein gp8 (8).